Here is a 152-residue protein sequence, read N- to C-terminus: 3-dehydroquinate dehydratase (152 aa).

Tyrosine 26 functions as the Proton acceptor in the catalytic mechanism. Substrate-binding residues include asparagine 77, histidine 83, and aspartate 90. Catalysis depends on histidine 103, which acts as the Proton donor. Substrate contacts are provided by residues leucine 104 to serine 105 and arginine 114.

It belongs to the type-II 3-dehydroquinase family. In terms of assembly, homododecamer.

It carries out the reaction 3-dehydroquinate = 3-dehydroshikimate + H2O. It functions in the pathway metabolic intermediate biosynthesis; chorismate biosynthesis; chorismate from D-erythrose 4-phosphate and phosphoenolpyruvate: step 3/7. Catalyzes a trans-dehydration via an enolate intermediate. This is 3-dehydroquinate dehydratase (aroQ) from Synechocystis sp. (strain ATCC 27184 / PCC 6803 / Kazusa).